A 1575-amino-acid chain; its full sequence is Lysophospholipase NTE1 (1575 aa).

The segment at Met-1–Asn-56 is disordered. The Cytoplasmic segment spans residues Met-1–Gly-99. Low complexity predominate over residues Leu-19–Ser-48. Residues Ile-100–Val-120 form a helical membrane-spanning segment. Topologically, residues Val-121–Thr-151 are lumenal. Residues Met-152 to Ile-172 traverse the membrane as a helical segment. Residues Arg-173–Ile-1575 are Cytoplasmic-facing. Disordered stretches follow at residues Asp-339–Val-425 and Gly-568–Gly-587. Over residues Arg-409–Ser-424 the composition is skewed to basic residues. A nucleoside 3',5'-cyclic phosphate-binding positions include Gly-737–Arg-856 and Arg-894–Arg-1014. The PNPLA domain occupies Leu-1272–Lys-1436. The short motif at Gly-1276 to Gly-1281 is the GXGXXG element. Positions Gly-1303 to Gly-1307 match the GXSXG motif. The active-site Nucleophile is the Ser-1305. Catalysis depends on Asp-1423, which acts as the Proton acceptor. The DGA/G motif lies at Asp-1423–Gly-1425.

This sequence belongs to the NTE family.

The protein resides in the endoplasmic reticulum membrane. The catalysed reaction is a 1-acyl-sn-glycero-3-phosphocholine + H2O = sn-glycerol 3-phosphocholine + a fatty acid + H(+). Inhibited by organophosphorus esters. Intracellular phospholipase B that catalyzes the double deacylation of phosphatidylcholine (PC) to glycerophosphocholine (GroPCho). Plays an important role in membrane lipid homeostasis. Responsible for the rapid PC turnover in response to inositol, elevated temperatures, or when choline is present in the growth medium. The sequence is that of Lysophospholipase NTE1 (NTE1) from Coccidioides immitis (strain RS) (Valley fever fungus).